The following is a 251-amino-acid chain: Triosephosphate isomerase (251 aa).

Substrate is bound at residue 9–11 (NWK). The active-site Electrophile is the histidine 95. Glutamate 167 functions as the Proton acceptor in the catalytic mechanism. Substrate-binding positions include glycine 173, serine 213, and 234-235 (GG). Serine 213 is subject to Phosphoserine.

Belongs to the triosephosphate isomerase family. In terms of assembly, homodimer.

It localises to the cytoplasm. It carries out the reaction D-glyceraldehyde 3-phosphate = dihydroxyacetone phosphate. The protein operates within carbohydrate biosynthesis; gluconeogenesis. Its pathway is carbohydrate degradation; glycolysis; D-glyceraldehyde 3-phosphate from glycerone phosphate: step 1/1. Its function is as follows. Involved in the gluconeogenesis. Catalyzes stereospecifically the conversion of dihydroxyacetone phosphate (DHAP) to D-glyceraldehyde-3-phosphate (G3P). This is Triosephosphate isomerase from Bacillus cytotoxicus (strain DSM 22905 / CIP 110041 / 391-98 / NVH 391-98).